The chain runs to 215 residues: 3-demethoxyubiquinol 3-hydroxylase (215 aa).

The Fe cation site is built by E64, E94, H97, E146, E178, and H181.

It belongs to the COQ7 family. Requires Fe cation as cofactor.

The protein localises to the cell membrane. It catalyses the reaction a 5-methoxy-2-methyl-3-(all-trans-polyprenyl)benzene-1,4-diol + AH2 + O2 = a 3-demethylubiquinol + A + H2O. It functions in the pathway cofactor biosynthesis; ubiquinone biosynthesis. Catalyzes the hydroxylation of 2-nonaprenyl-3-methyl-6-methoxy-1,4-benzoquinol during ubiquinone biosynthesis. The sequence is that of 3-demethoxyubiquinol 3-hydroxylase from Stutzerimonas stutzeri (strain A1501) (Pseudomonas stutzeri).